A 159-amino-acid polypeptide reads, in one-letter code: Ribosomal RNA large subunit methyltransferase H (159 aa).

Residues glycine 108 and 127–132 each bind S-adenosyl-L-methionine; that span reads FSKMTF.

This sequence belongs to the RNA methyltransferase RlmH family. As to quaternary structure, homodimer.

The protein resides in the cytoplasm. The enzyme catalyses pseudouridine(1915) in 23S rRNA + S-adenosyl-L-methionine = N(3)-methylpseudouridine(1915) in 23S rRNA + S-adenosyl-L-homocysteine + H(+). Functionally, specifically methylates the pseudouridine at position 1915 (m3Psi1915) in 23S rRNA. This Clostridium acetobutylicum (strain ATCC 824 / DSM 792 / JCM 1419 / IAM 19013 / LMG 5710 / NBRC 13948 / NRRL B-527 / VKM B-1787 / 2291 / W) protein is Ribosomal RNA large subunit methyltransferase H.